We begin with the raw amino-acid sequence, 257 residues long: tRNA (guanine-N(1)-)-methyltransferase (257 aa).

Residues Gly112 and 136-141 each bind S-adenosyl-L-methionine; that span reads LGDYVL.

It belongs to the RNA methyltransferase TrmD family. As to quaternary structure, homodimer.

The protein localises to the cytoplasm. The catalysed reaction is guanosine(37) in tRNA + S-adenosyl-L-methionine = N(1)-methylguanosine(37) in tRNA + S-adenosyl-L-homocysteine + H(+). Functionally, specifically methylates guanosine-37 in various tRNAs. This is tRNA (guanine-N(1)-)-methyltransferase from Salinispora tropica (strain ATCC BAA-916 / DSM 44818 / JCM 13857 / NBRC 105044 / CNB-440).